A 453-amino-acid polypeptide reads, in one-letter code: Chromosomal replication initiator protein DnaA (453 aa).

The interval 1–75 (MSENMEELWS…SLKKISGKQL (75 aa)) is domain I, interacts with DnaA modulators. A domain II region spans residues 75–114 (LKIKFLLPGEKIKMEEQNNENEEKPESTSKKSSQGSEHTT). Over residues 87–103 (KMEEQNNENEEKPESTS) the composition is skewed to basic and acidic residues. The tract at residues 87–112 (KMEEQNNENEEKPESTSKKSSQGSEH) is disordered. The tract at residues 115-331 (WLNPKYTFDT…GGLIRVIAYS (217 aa)) is domain III, AAA+ region. ATP is bound by residues Gly159, Gly161, Lys162, and Thr163. The tract at residues 332-453 (SMANKKITKE…DEIKNLLHGD (122 aa)) is domain IV, binds dsDNA.

The protein belongs to the DnaA family. Oligomerizes as a right-handed, spiral filament on DNA at oriC.

Its subcellular location is the cytoplasm. Functionally, plays an essential role in the initiation and regulation of chromosomal replication. ATP-DnaA binds to the origin of replication (oriC) to initiate formation of the DNA replication initiation complex once per cell cycle. Binds the DnaA box (a 9 base pair repeat at the origin) and separates the double-stranded (ds)DNA. Forms a right-handed helical filament on oriC DNA; dsDNA binds to the exterior of the filament while single-stranded (ss)DNA is stabiized in the filament's interior. The ATP-DnaA-oriC complex binds and stabilizes one strand of the AT-rich DNA unwinding element (DUE), permitting loading of DNA polymerase. After initiation quickly degrades to an ADP-DnaA complex that is not apt for DNA replication. Binds acidic phospholipids. The polypeptide is Chromosomal replication initiator protein DnaA (Natranaerobius thermophilus (strain ATCC BAA-1301 / DSM 18059 / JW/NM-WN-LF)).